Consider the following 794-residue polypeptide: MARNEPSSQQPSSSGSNGTPAQQNGSAKPSKVTVKVVNASFTKAADCYVEITSDTSSAAPKKTTVKKKTMAPEWNEHLNVHANESSTISFRLLQKAKLFDDTCLGMAKLKLSSLTRNENGEFKNDINNISLLAKDSSKIGTLNIIFSGYPERKRRSAGVRAETAASASSEASTSNGVATSSSARRPATAKRDTLAAPTSTAAAAAAATAGGTPAAGAEEQLPDGWEMRFDQYGRKYYVDHTTKSTTWERPSTQPLPQGWEMRRDPRGRVYYVDHNTRTTTWQRPTADMLEAHEQWQSGRDQAMLQWEQRFLLQQNNFSADDPLGPLPEGWEKRQDPNTSRMYFVNHVNRTTQWEDPRTQGFRGSDQPLPDGWEMRFTEQGVPFFIDHQSKTTTYNDPRTGKPVGPLGVVGVQMAMEKSFRWKIAQFRYLCLSNSVPNHVKITVSRNNVFEDSFQEIMRKNAVDLRRRLYIQFRGEEGLDYGGVAREWFFLLSHEVLNPMYCLFMYAGNNNYSLQINPASFVNPDHLKYFEYIGRFIAMALFHGKFIYSGFTMPFYKKMLNKKIVLKDIEQVDSEIYNSLMWIKDNNIDECDMELYFVADYELLGELKTYELKEGGTEIAVTEENKLEYIELLVEWRFNRGVEQQTKAFFTGFNSVFPLEWMQYFDERELELLLCGMQDVDVDDWQRNTVYRHYAPQSKQVTWFWQWVRSLDQEKRARLLQFVTGTCRVPVGGFSELMGSTGPQLFCIERVGKENWLPRSHTCFNRLDLPPYRSYDQLVEKLSMAIEMTEGFGNE.

The segment covering 1-16 (MARNEPSSQQPSSSGS) has biased composition (low complexity). Disordered regions lie at residues 1–31 (MARNEPSSQQPSSSGSNGTPAQQNGSAKPSK) and 155–198 (RSAG…AAPT). The C2 domain occupies 10 to 124 (QPSSSGSNGT…TRNENGEFKN (115 aa)). The span at 17-27 (NGTPAQQNGSA) shows a compositional bias: polar residues. Positions 161-186 (AETAASASSEASTSNGVATSSSARRP) are enriched in low complexity. WW domains are found at residues 219–252 (EQLPDGWEMRFDQYGRKYYVDHTTKSTTWERPST), 253–286 (QPLPQGWEMRRDPRGRVYYVDHNTRTTTWQRPTA), 324–358 (GPLPEGWEKRQDPNTSRMYFVNHVNRTTQWEDPRT), and 366–399 (QPLPDGWEMRFTEQGVPFFIDHQSKTTTYNDPRT). Positions 460-794 (NAVDLRRRLY…IEMTEGFGNE (335 aa)) constitute an HECT domain. Residue Cys-762 is the Glycyl thioester intermediate of the active site.

Interacts (via WW domains) with Kruppel-like factor klf-1. Interacts with ubiquitin-conjugating enzyme E2 ubc-18. As to expression, expressed in neurons localized in the head and tail of adults.

It carries out the reaction S-ubiquitinyl-[E2 ubiquitin-conjugating enzyme]-L-cysteine + [acceptor protein]-L-lysine = [E2 ubiquitin-conjugating enzyme]-L-cysteine + N(6)-ubiquitinyl-[acceptor protein]-L-lysine.. It participates in protein modification; protein ubiquitination. E3 ubiquitin-protein ligase which accepts ubiquitin from an E2 ubiquitin-conjugating enzyme in the form of a thioester and then directly transfers the ubiquitin to targeted substrates. Ubiquitinates klf-1. Required for diet restriction-mediated lifespan extension, acting in concert with Kruppel-like factor klf-1 in the intestine to perhaps modulate genes involved in lipid metabolism. Probably acting downstream of the Insulin/IGF-1-like signaling (IIS) mediated pathway, plays a role in the immune response to infection by the Gram-negative bacterium P.aeruginosa, at least partly in response to bacterial pore-forming toxins. The polypeptide is E3 ubiquitin-protein ligase wwp-1 (Caenorhabditis elegans).